Reading from the N-terminus, the 1093-residue chain is Semaphorin-5B (1093 aa).

A signal peptide spans 1–19 (MVVPGPLALSLLLSSLTLL). At 20 to 978 (VSHLSSSQDI…TSCGGFNLIH (959 aa)) the chain is on the extracellular side. The region spanning 45 to 495 (HPIVAFEDLK…LSDRVLRVPL (451 aa)) is the Sema domain. N-linked (GlcNAc...) asparagine glycosylation is found at N59 and N95. Intrachain disulfides connect C114–C124 and C141–C150. 3 N-linked (GlcNAc...) asparagine glycosylation sites follow: N157, N178, and N287. Cystine bridges form between C264–C367 and C288–C330. N-linked (GlcNAc...) asparagine glycosylation is found at N333, N378, N532, N539, N547, and N602. 7 consecutive TSP type-1 domains span residues 551–605 (DGGF…NCSR), 606–662 (NGAW…TPCP), 664–713 (PIFW…EACP), 721–776 (WTPW…ACDT), 795–850 (NGGW…QACP), 852–907 (RGAW…QACP), and 908–952 (EGWS…RPCP). 6 disulfide bridges follow: C618–C655, C622–C661, C633–C645, C676–C707, C680–C712, and C691–C697. N-linked (GlcNAc...) asparagine glycosylation is present at N728. 6 cysteine pairs are disulfide-bonded: C807/C844, C811/C849, C822/C834, C864/C901, C868/C906, and C879/C891. N-linked (GlcNAc...) asparagine glycosylation is present at N944. A helical transmembrane segment spans residues 979–999 (LIVTGVSCFLVSGLLTLAVYL). The Cytoplasmic segment spans residues 1000–1093 (SCQHCQRQSQ…SPGQRCFPNS (94 aa)).

Belongs to the semaphorin family. In terms of tissue distribution, in adult, only detected in brain.

The protein localises to the membrane. In terms of biological role, may act as a positive axonal guidance cue. This Mus musculus (Mouse) protein is Semaphorin-5B (Sema5b).